Here is a 110-residue protein sequence, read N- to C-terminus: Integration host factor subunit alpha (110 aa).

It belongs to the bacterial histone-like protein family. In terms of assembly, heterodimer of an alpha and a beta chain.

In terms of biological role, this protein is one of the two subunits of integration host factor, a specific DNA-binding protein that functions in genetic recombination as well as in transcriptional and translational control. The polypeptide is Integration host factor subunit alpha (Nitrobacter hamburgensis (strain DSM 10229 / NCIMB 13809 / X14)).